The following is a 128-amino-acid chain: Protein ripply2 (128 aa).

Residues 1-64 (MDTTESAESA…ALPSGPGMAE (64 aa)) form a disordered region. A compositionally biased stretch (low complexity) spans 17-28 (PSRSRCPPSAQP). A WRPW motif motif is present at residues 34–37 (WRPW). The tract at residues 74–109 (HPVRLFWPKSKCYDYLYQEAETLLKNFPIQATISFY) is ripply homology domain.

This sequence belongs to the ripply family. In terms of tissue distribution, expressed in the embryonic anterior presomitic mesoderm. First expressed in S-I at 8.5 dpc, where expression is maintained until 13.5 dpc, with an additional stripe of expression sometimes seen in the rostral part of S0 and S-I.

It localises to the nucleus. Its function is as follows. Plays a role in somitogenesis. Required for somite segregation and establishment of rostrocaudal polarity in somites. The polypeptide is Protein ripply2 (Mus musculus (Mouse)).